The following is a 427-amino-acid chain: Peptidase B (427 aa).

Lys-195 and Asp-200 together coordinate Mn(2+). Residue Lys-207 is part of the active site. Positions 218, 277, and 279 each coordinate Mn(2+). Arg-281 is a catalytic residue.

Belongs to the peptidase M17 family. As to quaternary structure, homohexamer. Requires Mn(2+) as cofactor.

It localises to the cytoplasm. The catalysed reaction is Release of an N-terminal amino acid, Xaa, from a peptide or arylamide. Xaa is preferably Glu or Asp but may be other amino acids, including Leu, Met, His, Cys and Gln.. Probably plays an important role in intracellular peptide degradation. This chain is Peptidase B, found in Shigella dysenteriae serotype 1 (strain Sd197).